The following is a 230-amino-acid chain: TorCAD operon transcriptional regulatory protein TorR (230 aa).

Residues 4 to 117 enclose the Response regulatory domain; sequence HIVIVEDEPV…ELVVRVKNLL (114 aa). Residue Asp-53 is modified to 4-aspartylphosphate. The segment at residues 132–227 is a DNA-binding region (ompR/PhoB-type); the sequence is DNCYRFAGYC…QHGEGYFLAA (96 aa).

In terms of assembly, interacts with TorI. TorI binds to the effector domain of TorR. This interaction, which does not interfere with TorR DNA binding activity, probably prevents the recruitment of RNA polymerase to the torCAD promoter. Post-translationally, phosphorylated and dephosphorylated by TorS.

The protein resides in the cytoplasm. Its function is as follows. Member of the two-component regulatory system TorS/TorR involved in the anaerobic utilization of trimethylamine-N-oxide (TMAO). Phosphorylated TorR activates the transcription of the torCAD operon by binding to four decameric boxes located in the torCAD promoter. Box1, 2 and 4 contain the DNA sequence 5'-CTGTTCATAT-3' and box3 contains the DNA sequence 5'-CCGTTCATCC-3'. Phosphorylated as well as unphosphorylated TorR negatively regulates its own expression by binding to box1 and 2. The sequence is that of TorCAD operon transcriptional regulatory protein TorR (torR) from Escherichia coli (strain K12).